The sequence spans 1031 residues: Semaphorin-6A (1031 aa).

A signal peptide spans 1–18 (MRPAALLLCLTLLHCAGA). The Extracellular segment spans residues 19-649 (GFPEDSEPIS…KSNDQLVPVT (631 aa)). A Sema domain is found at 24-512 (SEPISISHGN…FSTCVIKVPL (489 aa)). 3 N-linked (GlcNAc...) asparagine glycosylation sites follow: asparagine 33, asparagine 49, and asparagine 65. Disulfide bonds link cysteine 107–cysteine 117, cysteine 135–cysteine 144, cysteine 258–cysteine 369, and cysteine 283–cysteine 328. Asparagine 282 carries N-linked (GlcNAc...) asparagine glycosylation. N-linked (GlcNAc...) asparagine glycosylation is found at asparagine 434 and asparagine 461. Disulfide bonds link cysteine 477–cysteine 506, cysteine 515–cysteine 533, cysteine 521–cysteine 568, and cysteine 525–cysteine 542. A helical transmembrane segment spans residues 650–670 (LLAIAVILAFVMGAVFSGIIV). The Cytoplasmic segment spans residues 671 to 1031 (YCVCDHRRKD…TSMKPNDACT (361 aa)). Serine 698 carries the post-translational modification Phosphoserine. Disordered stretches follow at residues 754–777 (ALPT…SREW), 861–902 (SSKS…TGLS), and 914–1031 (GLEY…DACT). Over residues 921–931 (YPTNSLTRSHQ) the composition is skewed to polar residues. Residues 932-951 (TTTLKRNNTNSSNSSHLSRN) are compositionally biased toward low complexity. Serine 953 is modified (phosphoserine). Polar residues-rich tracts occupy residues 971–998 (QVHS…SLTR) and 1019–1031 (PLST…DACT).

The protein belongs to the semaphorin family. As to quaternary structure, active as a homodimer or oligomer. The SEMA6A homodimer interacts with a PLXNA2 homodimer, giving rise to a heterotetramer. Interacts with EVL. In terms of tissue distribution, particularly high levels in spinal cord, cerebellum, metencephalon, superior and inferior colliculus, diencephalon, olfactory bulb and eye.

It localises to the cell membrane. Its function is as follows. Cell surface receptor for PLXNA2 that plays an important role in cell-cell signaling. Required for normal granule cell migration in the developing cerebellum. Promotes reorganization of the actin cytoskeleton and plays an important role in axon guidance in the developing central nervous system. Can act as repulsive axon guidance cue. Has repulsive action towards migrating granular neurons. May play a role in channeling sympathetic axons into the sympathetic chains and controlling the temporal sequence of sympathetic target innervation. The polypeptide is Semaphorin-6A (Sema6a) (Mus musculus (Mouse)).